The sequence spans 225 residues: Perlwapin-like protein (225 aa).

The N-terminal stretch at 1–19 (MNHLWLFIVTVSCIYLVYG) is a signal peptide. 4 cysteine pairs are disulfide-bonded: C27/C57, C36/C61, C43/C56, and C49/C65. The region spanning 27-68 (CKVKFMGTACPLGRLVCEEDGDCLGVNQVCCYDGCGTTCHNK) is the WAP 1; atypical domain. N-linked (GlcNAc...) asparagine glycosylation is present at N67. The region spanning 117-169 (IIPSPELLCPVVTVRYAFCRFSTYTPCHTSNDCAVPGMKCCPDVCGKRCKFPI) is the WAP 2 domain. Cystine bridges form between C125–C157, C135–C161, C143–C156, and C149–C165. N-linked (GlcNAc...) asparagine glycosylation occurs at N170. The segment at 176–225 (QFQQTPLKPTVPLPQYQQTPLQPTVPSSQPPLQPTVPSPQSYNYKGACST) is disordered. The segment covering 188 to 201 (LPQYQQTPLQPTVP) has biased composition (low complexity). Residues 203-212 (SQPPLQPTVP) are compositionally biased toward pro residues. Over residues 213–225 (SPQSYNYKGACST) the composition is skewed to polar residues.

In terms of tissue distribution, component of the acid-soluble organic matrix of calcified layers of the shell (at protein level).

The protein localises to the secreted. This Lottia gigantea (Giant owl limpet) protein is Perlwapin-like protein.